A 355-amino-acid chain; its full sequence is Inositol polyphosphate multikinase (355 aa).

Methionine 1 carries the post-translational modification N-acetylmethionine. Lysine 31 is a binding site for ATP. Serine 97 is subject to Phosphoserine. ATP-binding positions include 118–120 and aspartate 131; that span reads ENL. 127–135 provides a ligand contact to substrate; it reads PNILDIKLG. Ca(2+)-binding residues include glutamate 271 and asparagine 274. The segment covering 284-304 has biased composition (acidic residues); it reads FIDDDDDDDDNDDDDDDDAEG. Positions 284–317 are disordered; it reads FIDDDDDDDDNDDDDDDDAEGSSEGPKDKKTTGS. Position 325 (aspartate 325) interacts with ATP. Glycine 334 contacts Ca(2+).

It belongs to the inositol phosphokinase (IPK) family. Interacts with ARG80 and MCM1. It depends on Ca(2+) as a cofactor.

The protein resides in the nucleus. The enzyme catalyses 1D-myo-inositol 1,4,5-trisphosphate + 2 ATP = 1D-myo-inositol 1,3,4,5,6-pentakisphosphate + 2 ADP + 2 H(+). The catalysed reaction is 1D-myo-inositol 1,4,5-trisphosphate + ATP = 1D-myo-inositol 1,4,5,6-tetrakisphosphate + ADP + H(+). It catalyses the reaction 1D-myo-inositol 1,4,5-trisphosphate + ATP = 1D-myo-inositol 1,3,4,5-tetrakisphosphate + ADP + H(+). It carries out the reaction 1D-myo-inositol 1,4,5,6-tetrakisphosphate + ATP = 1D-myo-inositol 1,3,4,5,6-pentakisphosphate + ADP + H(+). The enzyme catalyses a 1,2-diacyl-sn-glycero-3-phospho-(1D-myo-inositol-4,5-bisphosphate) + ATP = a 1,2-diacyl-sn-glycero-3-phospho-(1D-myo-inositol-3,4,5-trisphosphate) + ADP + H(+). Functionally, inositol phosphate kinase with both monophosphoinositol and diphosphoinositol polyphosphate synthase activities. Able to phosphorylate inositol 1,4,5-trisphosphate (Ins(1,4,5)P3) on both the carbon-3 and carbon-6 positions to synthesize inositol 1,3,4,5-tetrakisphosphate (Ins(1,3,4,5)P4) and inositol 1,4,5,6-tetrakisphosphate (Ins(1,4,5,6)P4), and then to subsequently phosphorylate and convert either isomer of InsP4 to inositol 1,3,4,5,6-pentakisphosphate (Ins(1,3,4,5,6)P5). Its predominant in vivo catalytic function is to convert Ins(1,4,5)P3 to Ins(1,4,5,6)P4 to Ins(1,3,4,5,6)P5 via 6- and 3-kinase activities. It can also use Ins(1,3,4,5,6)P5 as a substrate and act as a diphosphoinositol polyphosphate synthase to generate two different isomers of PP-InsP4. Also has a role in transcription regulation. Forms a complex with ARG80, ARG81 and MCM1 (ArgR-MCM1), which coordinates the expression of arginine anabolic and catabolic genes in response to arginine. Recruits ARG80 and MCM21 to stabilize them. Neither the kinase activity nor inositol phosphates are required for the formation of ArgR-MCM1 transcriptional complexes on DNA promoter elements and the control of arginine metabolism. In contrast, only the catalytic activity is required for PHO gene repression by phosphate and for NCR gene activation in response to nitrogen availability, indicating a role for inositol pyrophosphates in these controls. Inositol polyphosphates may be involved in the regulation of chromatin remodeling of transcription. Regulates nuclear mRNA export via inositol phosphate metabolism. Also has lipid kinase activity, transforming the lipid inositol phosphatidylinositol 4,5-bisphosphate (PI(4,5)P2) into phosphatidylinositol 3,4,5-trisphosphate (PI(3,4,5)P3) in the nucleus. Its kinase activity is necessary for the propagation of most [PSI+] prion variants. This is Inositol polyphosphate multikinase (ARG82) from Saccharomyces cerevisiae (strain ATCC 204508 / S288c) (Baker's yeast).